Here is a 236-residue protein sequence, read N- to C-terminus: Purine nucleoside phosphorylase DeoD-type (236 aa).

Position 5 (histidine 5) interacts with a purine D-ribonucleoside. Phosphate contacts are provided by residues glycine 21, arginine 25, arginine 44, and 88 to 91 (RIGS). A purine D-ribonucleoside contacts are provided by residues 180–182 (EME) and 204–205 (SD). Catalysis depends on aspartate 205, which acts as the Proton donor.

The protein belongs to the PNP/UDP phosphorylase family. As to quaternary structure, homohexamer; trimer of homodimers.

The enzyme catalyses a purine D-ribonucleoside + phosphate = a purine nucleobase + alpha-D-ribose 1-phosphate. The catalysed reaction is a purine 2'-deoxy-D-ribonucleoside + phosphate = a purine nucleobase + 2-deoxy-alpha-D-ribose 1-phosphate. Catalyzes the reversible phosphorolytic breakdown of the N-glycosidic bond in the beta-(deoxy)ribonucleoside molecules, with the formation of the corresponding free purine bases and pentose-1-phosphate. The protein is Purine nucleoside phosphorylase DeoD-type of Chromobacterium violaceum (strain ATCC 12472 / DSM 30191 / JCM 1249 / CCUG 213 / NBRC 12614 / NCIMB 9131 / NCTC 9757 / MK).